Consider the following 153-residue polypeptide: Transcriptional repressor NrdR (153 aa).

A zinc finger lies at 3-34; the sequence is CPFCGKENTRVIDSRPADDCSSIRRRRQCDEC. The region spanning 49-139 is the ATP-cone domain; the sequence is LVVIKKDNNR…VYREFKDVNT (91 aa).

Belongs to the NrdR family. Requires Zn(2+) as cofactor.

In terms of biological role, negatively regulates transcription of bacterial ribonucleotide reductase nrd genes and operons by binding to NrdR-boxes. This is Transcriptional repressor NrdR from Lachnoclostridium phytofermentans (strain ATCC 700394 / DSM 18823 / ISDg) (Clostridium phytofermentans).